Consider the following 418-residue polypeptide: Actin-related protein 3 (418 aa).

M1 carries the N-acetylmethionine modification.

It belongs to the actin family. ARP3 subfamily. As to quaternary structure, component of the Arp2/3 complex composed of arpB/Arp2, arpC/Arp3, arcA/p41-arc, arcB/p34-arc, arcC/p21-arc, arcD/p20-arc and arcE/p16-arc. Interacts with carmil (via the region between the LRR domain and COOH-terminal proline-rich domain); carmil is required for Arp2/3-dependent actin nucleation. Arp2/3 complex, MyoB, MyoC, and the alpha and beta subunits of capping protein all form a larger complex with carmil.

The protein resides in the cytoplasm. The protein localises to the cytoskeleton. It is found in the cytosol. Its subcellular location is the cell cortex. It localises to the cell projection. The protein resides in the pseudopodium. Its function is as follows. Functions as ATP-binding component of the Arp2/3 complex which is involved in regulation of actin polymerization and together with an activating nucleation-promoting factor (NPF) mediates the formation of branched actin networks. Seems to contact the pointed end of the daughter actin filament. The Arp2/3 complex is involved in organizing the actin system in cell motility and chemotaxis, in phagocytosis and macropinocytosis, at late steps of endosome processing, and in mitosis. In concert with a group of other proteins, the Arp2/3 complex plays a general role in the rapid activation and adaptation of the actin system to its multiple functions. In Dictyostelium discoideum (Social amoeba), this protein is Actin-related protein 3 (arpC).